The sequence spans 129 residues: Large ribosomal subunit protein bL12 (129 aa).

Belongs to the bacterial ribosomal protein bL12 family. As to quaternary structure, homodimer. Part of the ribosomal stalk of the 50S ribosomal subunit. Forms a multimeric L10(L12)X complex, where L10 forms an elongated spine to which 2 to 4 L12 dimers bind in a sequential fashion. Binds GTP-bound translation factors.

In terms of biological role, forms part of the ribosomal stalk which helps the ribosome interact with GTP-bound translation factors. Is thus essential for accurate translation. This Protochlamydia amoebophila (strain UWE25) protein is Large ribosomal subunit protein bL12.